The following is a 186-amino-acid chain: Lipid A acyltransferase PagP (186 aa).

The first 25 residues, 1-25 (MNVSKYVAIFSFVFIQLISVGKVFA), serve as a signal peptide directing secretion. Catalysis depends on residues His-58, Asp-101, and Ser-102.

It belongs to the lipid A palmitoyltransferase family. Homodimer.

The protein localises to the cell outer membrane. The enzyme catalyses a lipid A + a 1,2-diacyl-sn-glycero-3-phosphocholine = a hepta-acyl lipid A + a 2-acyl-sn-glycero-3-phosphocholine. It carries out the reaction a lipid IVA + a 1,2-diacyl-sn-glycero-3-phosphocholine = a lipid IVB + a 2-acyl-sn-glycero-3-phosphocholine. It catalyses the reaction a lipid IIA + a 1,2-diacyl-sn-glycero-3-phosphocholine = a lipid IIB + a 2-acyl-sn-glycero-3-phosphocholine. In terms of biological role, transfers a fatty acid residue from the sn-1 position of a phospholipid to the N-linked hydroxyfatty acid chain on the proximal unit of lipid A or its precursors. The chain is Lipid A acyltransferase PagP from Shigella flexneri serotype X (strain 2002017).